The following is a 283-amino-acid chain: Gap junction beta-1 protein (283 aa).

Residues 1–22 are Cytoplasmic-facing; sequence MNWTGLYTLLSGVNRHSTAIGR. The helical transmembrane segment at 23–45 threads the bilayer; the sequence is VWLSVIFIFRIMVLVVAAESVWG. Over 46–75 the chain is Extracellular; it reads DEKSSFICNTLQPGCNSVCYDQFFPISHVR. A helical membrane pass occupies residues 76-95; the sequence is LWSLQLILVSTPALLVAMHV. Over 96 to 130 the chain is Cytoplasmic; the sequence is AHQQHIEKKMLRLEGHGDPLHLEEVKRHKVHISGT. Residues 131 to 153 form a helical membrane-spanning segment; it reads LWWTYVISVVFRLLFEAVFMYVF. Residues 154-191 are Extracellular-facing; it reads YLLYPGYAMVRLVKCDVYPCPNTVDCFVSRPTEKTVFT. The chain crosses the membrane as a helical span at residues 192–214; it reads VFMLAASGICIILNVAEVVYLII. At 215–283 the chain is on the cytoplasmic side; it reads RACARRAQRR…AEKSDRCSAC (69 aa). Phosphoserine occurs at positions 233, 258, 266, and 277.

This sequence belongs to the connexin family. Beta-type (group I) subfamily. In terms of assembly, a connexon is composed of a hexamer of connexins. Interacts with CNST.

It is found in the cell membrane. The protein localises to the cell junction. The protein resides in the gap junction. One gap junction consists of a cluster of closely packed pairs of transmembrane channels, the connexons, through which materials of low MW diffuse from one cell to a neighboring cell. This Homo sapiens (Human) protein is Gap junction beta-1 protein (GJB1).